A 178-amino-acid chain; its full sequence is NADH-quinone oxidoreductase subunit I (178 aa).

2 consecutive 4Fe-4S ferredoxin-type domains span residues 45–74 (RHPD…VEAA) and 90–119 (KVYE…LGNE). Residues Cys-54, Cys-57, Cys-60, Cys-64, Cys-99, Cys-102, Cys-105, and Cys-109 each coordinate [4Fe-4S] cluster.

Belongs to the complex I 23 kDa subunit family. In terms of assembly, NDH-1 is composed of 15 different subunits. Subunits NuoA, H, J, K, L, M, N constitute the membrane sector of the complex. It depends on [4Fe-4S] cluster as a cofactor.

The protein localises to the cell membrane. It carries out the reaction a quinone + NADH + 5 H(+)(in) = a quinol + NAD(+) + 4 H(+)(out). In terms of biological role, NDH-1 shuttles electrons from NADH, via FMN and iron-sulfur (Fe-S) centers, to quinones in the respiratory chain. The immediate electron acceptor for the enzyme in this species is believed to be ubiquinone. Couples the redox reaction to proton translocation (for every two electrons transferred, four hydrogen ions are translocated across the cytoplasmic membrane), and thus conserves the redox energy in a proton gradient. This Deinococcus radiodurans (strain ATCC 13939 / DSM 20539 / JCM 16871 / CCUG 27074 / LMG 4051 / NBRC 15346 / NCIMB 9279 / VKM B-1422 / R1) protein is NADH-quinone oxidoreductase subunit I.